Here is a 718-residue protein sequence, read N- to C-terminus: ADP-ribosylation factor-binding protein GGA3 (718 aa).

The VHS domain maps to 16–146 (ATNPSNRQED…MLKRQGIVQS (131 aa)). Phosphoserine is present on residues Ser159 and Ser275. The GAT domain maps to 171-298 (DEEKSKLLAR…VINSYKTIIE (128 aa)). The segment at 299 to 588 (GQIVNGEVTT…VHVPLESIKP (290 aa)) is unstructured hinge. Composition is skewed to low complexity over residues 334–350 (APSN…SGIP) and 360–369 (GPPRSRSSSQ). Residues 334–381 (APSNSSPALAPPTSGIPILPPPPQTSGPPRSRSSSQAEAPPGSDSTNN) form a disordered region. The short motif at 387–391 (DEELL) is the Autoinhibitory element. Disordered stretches follow at residues 395–455 (LTDP…MSQA) and 477–506 (SFMF…STSH). One can recognise a GAE domain in the interval 589–710 (SSALPVTAYD…TELGEVDQFP (122 aa)).

The protein belongs to the GGA protein family. As to quaternary structure, monomer. Interacts with GGA1 and GGA2. Binds to clathrin and activated ARFs, such as ARF1, ARF5 and ARF6. Binds RABEP1 and RABGEF1. Interacts with the membrane proteins M6PR/CD-MPR and IGF2R/CI-MPR and the accessory proteins SYNRG, EPN4, NECAP1, NECAP2 and AFTPH/aftiphilin. Interacts with TSG101 and UBC. Interacts with ADRA2B. Interacts with NTRK1; the interaction is independent of NTRK1 activation and ubiquitination. Interacts (via VHS domain) with BACE1 (via DXXLL motif). Post-translationally, phosphorylated by CK2 and dephosphorylated by PP2A. Phosphorylation of GGA3 allows the internal DXXLL motif to bind the VHS domain and to inhibit the recognition of cargo signals. In terms of processing, ubiquitinated. Proteolytically cleaved during apoptosis by CASP3.

The protein localises to the golgi apparatus. It localises to the trans-Golgi network membrane. The protein resides in the endosome membrane. Its subcellular location is the early endosome membrane. It is found in the recycling endosome membrane. In terms of biological role, plays a role in protein sorting and trafficking between the trans-Golgi network (TGN) and endosomes. Mediates the ARF-dependent recruitment of clathrin to the TGN and binds ubiquitinated proteins and membrane cargo molecules with a cytosolic acidic cluster-dileucine (DXXLL) motif. Its function is as follows. Plays a role in protein sorting and trafficking between the trans-Golgi network (TGN) and endosomes. Mediates the ARF-dependent recruitment of clathrin to the TGN and binds ubiquitinated proteins and membrane cargo molecules with a cytosolic acidic cluster-dileucine (DXXLL) motif. Mediates export of the GPCR receptor ADRA2B to the cell surface. Involved in BACE1 transport and sorting as well as regulation of BACE1 protein levels. Regulates retrograde transport of BACE1 from endosomes to the trans-Golgi network via interaction through the VHS motif and dependent of BACE1 phosphorylation. Modulates BACE1 protein levels independently of the interaction between VHS domain and DXXLL motif through recognition of ubiquitination. Key player in a novel DXXLL-mediated endosomal sorting machinery to the recycling pathway that targets NTRK1 to the plasma membrane. The protein is ADP-ribosylation factor-binding protein GGA3 (Gga3) of Mus musculus (Mouse).